The sequence spans 127 residues: Glycine cleavage system H protein (127 aa).

The region spanning 22–104 (EVVIGITHFA…YEGAWMVKVE (83 aa)) is the Lipoyl-binding domain. Lys63 carries the N6-lipoyllysine modification.

This sequence belongs to the GcvH family. As to quaternary structure, the glycine cleavage system is composed of four proteins: P, T, L and H. The cofactor is (R)-lipoate.

The glycine cleavage system catalyzes the degradation of glycine. The H protein shuttles the methylamine group of glycine from the P protein to the T protein. In terms of biological role, is also involved in protein lipoylation via its role as an octanoyl/lipoyl carrier protein intermediate. This Bacillus cereus (strain ATCC 10987 / NRS 248) protein is Glycine cleavage system H protein.